The following is a 326-amino-acid chain: MAFTPFPPRQPTASARLPLTLITLDDWALATITGADSEKYMQGQVTADVSQMTEDQHLLAAHCDAKGKMWSNLRLFRDGDGFAWIERRSVREPQLTELKKYAVFSKVTIAPDDERVLLGVAGFQARAALANLFSELPSKEKQVVKEGATTLLWFEHPAERFLIVTDEATANMLTDKLRGEAELNNSQQWLALNIEAGFPVIDAANSGQFIPQATNLQALGGISFKKGCYTGQEMVARAKFRGANKRALWLLTGSASRLPEAGEDLELKMGENWRRTGTVLAAVKLEDGQVVVQVVMNNDMEPDSIFRVRDDANTLHIEPLPYSLEE.

2 residues coordinate folate: Trp-27 and Trp-189.

The protein belongs to the tRNA-modifying YgfZ family.

It is found in the cytoplasm. Functionally, folate-binding protein involved in regulating the level of ATP-DnaA and in the modification of some tRNAs. It is probably a key factor in regulatory networks that act via tRNA modification, such as initiation of chromosomal replication. The protein is tRNA-modifying protein YgfZ of Escherichia coli O17:K52:H18 (strain UMN026 / ExPEC).